The primary structure comprises 118 residues: Large ribosomal subunit protein bL19 (118 aa).

It belongs to the bacterial ribosomal protein bL19 family.

This protein is located at the 30S-50S ribosomal subunit interface and may play a role in the structure and function of the aminoacyl-tRNA binding site. This chain is Large ribosomal subunit protein bL19, found in Nautilia profundicola (strain ATCC BAA-1463 / DSM 18972 / AmH).